The following is a 211-amino-acid chain: DNA dC-&gt;dU-editing enzyme APOBEC-3H (211 aa).

Positions 4 to 126 constitute a CMP/dCMP-type deaminase domain; the sequence is LTAKTFSLQF…RRQQEGLRLL (123 aa). Residue H54 participates in Zn(2+) binding. The Proton donor role is filled by E56. Positions 85 and 88 each coordinate Zn(2+).

The protein belongs to the cytidine and deoxycytidylate deaminase family. As to quaternary structure, homodimer. It depends on Zn(2+) as a cofactor.

The protein localises to the cytoplasm. It catalyses the reaction a 2'-deoxycytidine in single-stranded DNA + H2O + H(+) = a 2'-deoxyuridine in single-stranded DNA + NH4(+). Its function is as follows. DNA deaminase (cytidine deaminase) which may act as an inhibitor of retrovirus replication and retrotransposon mobility via deaminase-dependent and -independent mechanisms. This is DNA dC-&gt;dU-editing enzyme APOBEC-3H from Pongo pygmaeus (Bornean orangutan).